We begin with the raw amino-acid sequence, 206 residues long: Translation initiation factor IF-3 (206 aa).

Belongs to the IF-3 family. Monomer.

The protein localises to the cytoplasm. IF-3 binds to the 30S ribosomal subunit and shifts the equilibrium between 70S ribosomes and their 50S and 30S subunits in favor of the free subunits, thus enhancing the availability of 30S subunits on which protein synthesis initiation begins. The protein is Translation initiation factor IF-3 of Chlorobium luteolum (strain DSM 273 / BCRC 81028 / 2530) (Pelodictyon luteolum).